The primary structure comprises 405 residues: Probable tRNA sulfurtransferase (405 aa).

The region spanning 60-165 is the THUMP domain; that stretch reads QEVSASLKKI…PDAAYISHEE (106 aa). ATP contacts are provided by residues 183 to 184, 208 to 209, Arg265, Gly287, and Gln296; these read ML and HF.

This sequence belongs to the ThiI family.

It is found in the cytoplasm. It carries out the reaction [ThiI sulfur-carrier protein]-S-sulfanyl-L-cysteine + a uridine in tRNA + 2 reduced [2Fe-2S]-[ferredoxin] + ATP + H(+) = [ThiI sulfur-carrier protein]-L-cysteine + a 4-thiouridine in tRNA + 2 oxidized [2Fe-2S]-[ferredoxin] + AMP + diphosphate. The enzyme catalyses [ThiS sulfur-carrier protein]-C-terminal Gly-Gly-AMP + S-sulfanyl-L-cysteinyl-[cysteine desulfurase] + AH2 = [ThiS sulfur-carrier protein]-C-terminal-Gly-aminoethanethioate + L-cysteinyl-[cysteine desulfurase] + A + AMP + 2 H(+). Its pathway is cofactor biosynthesis; thiamine diphosphate biosynthesis. Functionally, catalyzes the ATP-dependent transfer of a sulfur to tRNA to produce 4-thiouridine in position 8 of tRNAs, which functions as a near-UV photosensor. Also catalyzes the transfer of sulfur to the sulfur carrier protein ThiS, forming ThiS-thiocarboxylate. This is a step in the synthesis of thiazole, in the thiamine biosynthesis pathway. The sulfur is donated as persulfide by IscS. This is Probable tRNA sulfurtransferase from Streptococcus suis (strain 98HAH33).